A 275-amino-acid polypeptide reads, in one-letter code: F420-dependent methylenetetrahydromethanopterin dehydrogenase (275 aa).

It belongs to the MTD family.

The enzyme catalyses 5,10-methylenetetrahydromethanopterin + oxidized coenzyme F420-(gamma-L-Glu)(n) + 2 H(+) = 5,10-methenyl-5,6,7,8-tetrahydromethanopterin + reduced coenzyme F420-(gamma-L-Glu)(n). It functions in the pathway one-carbon metabolism; methanogenesis from CO(2); 5,10-methylene-5,6,7,8-tetrahydromethanopterin from 5,10-methenyl-5,6,7,8-tetrahydromethanopterin (coenzyme F420 route): step 1/1. Catalyzes the reversible reduction of methenyl-H(4)MPT(+) to methylene-H(4)MPT. This is F420-dependent methylenetetrahydromethanopterin dehydrogenase from Methanobrevibacter smithii (strain ATCC 35061 / DSM 861 / OCM 144 / PS).